We begin with the raw amino-acid sequence, 523 residues long: Cytochrome P450 52A3-A (523 aa).

Residues W17 to L34 traverse the membrane as a helical segment. C471 contributes to the heme binding site.

The protein belongs to the cytochrome P450 family. Heme serves as cofactor.

Its subcellular location is the membrane. Its function is as follows. Together with an NADPH cytochrome P450 the enzyme system catalyzes the terminal hydroxylation as the first step in the assimilation of alkanes and fatty acids. The sequence is that of Cytochrome P450 52A3-A (CYP52A3-A) from Candida maltosa (Yeast).